A 315-amino-acid chain; its full sequence is Glutaminase (315 aa).

Substrate is bound by residues Ser-70, Asn-120, Glu-166, Asn-173, Tyr-197, Tyr-249, and Val-267.

Belongs to the glutaminase family. As to quaternary structure, homotetramer.

The catalysed reaction is L-glutamine + H2O = L-glutamate + NH4(+). The chain is Glutaminase from Rhizobium meliloti (strain 1021) (Ensifer meliloti).